A 636-amino-acid chain; its full sequence is Basic helix-loop-helix ARNT-like protein 2 (636 aa).

Residues 25-62 (VSSRVSPGTRPTAMGSFSSHMTEFPRKRKGSDSDPSQS) form a disordered region. An interaction with PER2 region spans residues 46–258 (TEFPRKRKGS…SPREKLIDAK (213 aa)). The Nuclear localization signal motif lies at 49–54 (PRKRKG). A bHLH domain is found at 107–160 (AFREAHSQTEKRRRDKMNNLIEELSAMIPQCNPMARKLDKLTVLRMAVQHLRSL). Residues 177-187 (LQDNELRHLIL) carry the Nuclear export signal 1 motif. The PAS 1 domain maps to 178-250 (QDNELRHLIL…EQLSSFDISP (73 aa)). Lysine 287 participates in a covalent cross-link: Glycyl lysine isopeptide (Lys-Gly) (interchain with G-Cter in SUMO2 and SUMO3). A Glycyl lysine isopeptide (Lys-Gly) (interchain with G-Cter in SUMO2) cross-link involves residue lysine 294. The PAS 2 domain maps to 357–427 (VPQNSGEINV…DKHKAVLQSK (71 aa)). The Nuclear export signal 2 signature appears at 392–400 (LGYLPQELL). One can recognise a PAC domain in the interval 432–475 (TDSYKFRAKDGSFVTLKSQWFSFTNPWTKELEYIVSVNTLVLGH).

In terms of assembly, component of the circadian core oscillator, which includes the CRY proteins, CLOCK, or NPAS2, BMAL1 or BMAL2, CSNK1D and/or CSNK1E, TIMELESS and the PER proteins. Interacts directly with CLOCK to form the BMAL2-CLOCK transactivator. Can form heterodimers or homodimers which interact directly with CLOCK to form the transcription activator. Interacts with NPAS2 and HIF1A. Interacts with PER2. In terms of tissue distribution, expressed in fetal brain. Highly expressed in brain and placenta. Lower levels in heart, liver, thymus, kidney and lung. Located to endothelial cells and neuronal cells of the suprachiasmatic nucleus (SCN). Also detected in endothelial cells of the heart, lung and kidney. In the brain, specifically expressed in the thalamus, hippocampus and amygdala.

It is found in the nucleus. Its function is as follows. Transcriptional activator which forms a core component of the circadian clock. The circadian clock, an internal time-keeping system, regulates various physiological processes through the generation of approximately 24 hour circadian rhythms in gene expression, which are translated into rhythms in metabolism and behavior. It is derived from the Latin roots 'circa' (about) and 'diem' (day) and acts as an important regulator of a wide array of physiological functions including metabolism, sleep, body temperature, blood pressure, endocrine, immune, cardiovascular, and renal function. Consists of two major components: the central clock, residing in the suprachiasmatic nucleus (SCN) of the brain, and the peripheral clocks that are present in nearly every tissue and organ system. Both the central and peripheral clocks can be reset by environmental cues, also known as Zeitgebers (German for 'timegivers'). The predominant Zeitgeber for the central clock is light, which is sensed by retina and signals directly to the SCN. The central clock entrains the peripheral clocks through neuronal and hormonal signals, body temperature and feeding-related cues, aligning all clocks with the external light/dark cycle. Circadian rhythms allow an organism to achieve temporal homeostasis with its environment at the molecular level by regulating gene expression to create a peak of protein expression once every 24 hours to control when a particular physiological process is most active with respect to the solar day. Transcription and translation of core clock components (CLOCK, NPAS2, BMAL1, BMAL2, PER1, PER2, PER3, CRY1 and CRY2) plays a critical role in rhythm generation, whereas delays imposed by post-translational modifications (PTMs) are important for determining the period (tau) of the rhythms (tau refers to the period of a rhythm and is the length, in time, of one complete cycle). A diurnal rhythm is synchronized with the day/night cycle, while the ultradian and infradian rhythms have a period shorter and longer than 24 hours, respectively. Disruptions in the circadian rhythms contribute to the pathology of cardiovascular diseases, cancer, metabolic syndromes and aging. A transcription/translation feedback loop (TTFL) forms the core of the molecular circadian clock mechanism. Transcription factors, CLOCK or NPAS2 and BMAL1 or BMAL2, form the positive limb of the feedback loop, act in the form of a heterodimer and activate the transcription of core clock genes and clock-controlled genes (involved in key metabolic processes), harboring E-box elements (5'-CACGTG-3') within their promoters. The core clock genes: PER1/2/3 and CRY1/2 which are transcriptional repressors form the negative limb of the feedback loop and interact with the CLOCK|NPAS2-BMAL1|BMAL2 heterodimer inhibiting its activity and thereby negatively regulating their own expression. This heterodimer also activates nuclear receptors NR1D1/2 and RORA/B/G, which form a second feedback loop and which activate and repress BMAL1 transcription, respectively. The CLOCK-BMAL2 heterodimer activates the transcription of SERPINE1/PAI1 and BHLHE40/DEC1. The chain is Basic helix-loop-helix ARNT-like protein 2 from Homo sapiens (Human).